The chain runs to 246 residues: Type III pantothenate kinase (246 aa).

Residue 11–18 participates in ATP binding; that stretch reads DIGNSFIK. Substrate is bound by residues tyrosine 95 and 102 to 105; that span reads GVDR. Catalysis depends on aspartate 104, which acts as the Proton acceptor. Aspartate 125 is a K(+) binding site. Threonine 128 serves as a coordination point for ATP. Threonine 179 is a substrate binding site.

The protein belongs to the type III pantothenate kinase family. As to quaternary structure, homodimer. NH4(+) is required as a cofactor. K(+) serves as cofactor.

The protein resides in the cytoplasm. The catalysed reaction is (R)-pantothenate + ATP = (R)-4'-phosphopantothenate + ADP + H(+). It participates in cofactor biosynthesis; coenzyme A biosynthesis; CoA from (R)-pantothenate: step 1/5. Functionally, catalyzes the phosphorylation of pantothenate (Pan), the first step in CoA biosynthesis. The sequence is that of Type III pantothenate kinase from Pseudoalteromonas atlantica (strain T6c / ATCC BAA-1087).